Here is a 505-residue protein sequence, read N- to C-terminus: Trans-cinnamate 4-monooxygenase (505 aa).

Residues 3–23 (LLLVEKTLLALFAAIIASIFI) traverse the membrane as a helical segment. (E)-cinnamate is bound by residues 213–218 (RSRLAQ) and alanine 306. Position 447 (cysteine 447) interacts with heme.

This sequence belongs to the cytochrome P450 family. Heme serves as cofactor.

Its subcellular location is the membrane. It catalyses the reaction (E)-cinnamate + reduced [NADPH--hemoprotein reductase] + O2 = (E)-4-coumarate + oxidized [NADPH--hemoprotein reductase] + H2O + H(+). Its pathway is phenylpropanoid metabolism; trans-4-coumarate biosynthesis; trans-4-coumarate from trans-cinnamate: step 1/1. Functionally, catalyzes the first oxidative step of the phenylpropanoid pathway in higher plants by transforming trans-cinnamate into p-coumarate. The compounds formed by this pathway are essential components for lignification, pollination, and defense against ultraviolet light, predators and pathogens. The protein is Trans-cinnamate 4-monooxygenase (CYP73A12) of Zinnia elegans (Garden zinnia).